We begin with the raw amino-acid sequence, 357 residues long: tRNA N6-adenosine threonylcarbamoyltransferase (357 aa).

His-115 and His-119 together coordinate Fe cation. Substrate is bound by residues 137-141 (LASGG), Asp-170, Gly-183, and Asn-281. Asp-309 is a Fe cation binding site.

The protein belongs to the KAE1 / TsaD family. It depends on Fe(2+) as a cofactor.

It localises to the cytoplasm. It catalyses the reaction L-threonylcarbamoyladenylate + adenosine(37) in tRNA = N(6)-L-threonylcarbamoyladenosine(37) in tRNA + AMP + H(+). In terms of biological role, required for the formation of a threonylcarbamoyl group on adenosine at position 37 (t(6)A37) in tRNAs that read codons beginning with adenine. Is involved in the transfer of the threonylcarbamoyl moiety of threonylcarbamoyl-AMP (TC-AMP) to the N6 group of A37, together with TsaE and TsaB. TsaD likely plays a direct catalytic role in this reaction. The protein is tRNA N6-adenosine threonylcarbamoyltransferase of Nitrobacter winogradskyi (strain ATCC 25391 / DSM 10237 / CIP 104748 / NCIMB 11846 / Nb-255).